The primary structure comprises 315 residues: Methionyl-tRNA formyltransferase (315 aa).

Residues 2 to 189 are N-terminal domain; the sequence is SESLRIIFAG…LITTLKQLAD (188 aa). 113-116 provides a ligand contact to (6S)-5,6,7,8-tetrahydrofolate; that stretch reads SLLP. The segment at 210–315 is C-terminal domain; sequence KEEARIDWSL…EWFVPGNRLV (106 aa).

The protein belongs to the Fmt family.

The catalysed reaction is L-methionyl-tRNA(fMet) + (6R)-10-formyltetrahydrofolate = N-formyl-L-methionyl-tRNA(fMet) + (6S)-5,6,7,8-tetrahydrofolate + H(+). Functionally, attaches a formyl group to the free amino group of methionyl-tRNA(fMet). The formyl group appears to play a dual role in the initiator identity of N-formylmethionyl-tRNA by promoting its recognition by IF2 and preventing the misappropriation of this tRNA by the elongation apparatus. The protein is Methionyl-tRNA formyltransferase of Escherichia coli O157:H7.